Reading from the N-terminus, the 740-residue chain is MARIVAANDDDSMELNTISSIHDSTLGQLLKNVSDVRKMAIGDETPVHESLNQDYNDGYMRTVPFVLSFDNLTYNVSVRPKLDFRNLFPRRRTEDPEIAQTARPKTKTLLNNISGETRDGEIMAVLGASGSGKSTLIDALANRIAKGSLKGTVKLNGETLQSRMLKVISAYVMQDDLLFPMLTVEETLMFAAEFRLPRSLPKSKKKLRVQALIDQLGIRNAAKTIIGDEGHRGISGGERRRVSIGIDIIHDPILLFLDEPTSGLDSTSAFMVVKVLKRIAQSGSIVIMSIHQPSHRVLGLLDRLIFLSRGHTVYSGSPASLPRFFTEFGSPIPENENRTEFALDLIRELEGSAGGTRGLIEFNKKWQEMKKQSNRQPPLTPPSSPYPNLTLKEAIAASISRGKLVSGGESVAHGGATTNTTTLAVPAFANPMWIEIKTLSKRSMLNSRRQPELFGIRIASVVITGFILATVFWRLDNSPKGVQERLGFFAFAMSTMFYTCADALPVFLQERYIFMRETAYNAYRRSSYVLSHAIVSFPSLIFLSVAFAATTYWAVGLDGGLTGLLFYCLIILASFWSGSSFVTFLSGVVPSVMLGYTIVVAILAYFLLFSGFFINRNRIPDYWIWFHYMSLVKYPYEAVLQNEFSDATKCFVRGVQIFDNTPLGELPEVMKLKLLGTVSKSLGVTISSTTCLTTGSDILRQQGVVQLSKWNCLFITVAFGFFFRILFYFTLLLGSKNKRR.

Residues 82-334 (LDFRNLFPRR…FTEFGSPIPE (253 aa)) enclose the ABC transporter domain. 127-134 (GASGSGKS) serves as a coordination point for ATP. The 211-residue stretch at 434–644 (IEIKTLSKRS…PYEAVLQNEF (211 aa)) folds into the ABC transmembrane type-2 domain. 6 consecutive transmembrane segments (helical) span residues 453–473 (LFGI…TVFW), 488–508 (FFAF…PVFL), 529–549 (VLSH…AFAA), 563–585 (GLLF…VTFL), 594–614 (LGYT…GFFI), and 713–733 (LFIT…TLLL).

This sequence belongs to the ABC transporter superfamily. ABCG family. Eye pigment precursor importer (TC 3.A.1.204) subfamily.

Its subcellular location is the membrane. This chain is ABC transporter G family member 1 (ABCG1), found in Arabidopsis thaliana (Mouse-ear cress).